Here is a 303-residue protein sequence, read N- to C-terminus: Epimerase family protein YfhF (303 aa).

Belongs to the NAD(P)-dependent epimerase/dehydratase family. SDR39U1 subfamily.

In Bacillus subtilis (strain 168), this protein is Epimerase family protein YfhF (yfhF).